A 483-amino-acid polypeptide reads, in one-letter code: Lipoamide acyltransferase component of branched-chain alpha-keto acid dehydrogenase complex, mitochondrial (483 aa).

The transit peptide at 1-75 directs the protein to the mitochondrion; it reads MIARRIWRSH…AMATDSNSGL (75 aa). One can recognise a Lipoyl-binding domain in the interval 76-150; sequence IDVPLAQTGE…KVGETLVRLA (75 aa). At Lys-116 the chain carries N6-lipoyllysine. The Peripheral subunit-binding (PSBD) domain maps to 183–220; sequence LSTPAVRNLAKDLGIDINVITGTGKDGRVLKEDVLRFS. Residues His-453 and Asp-457 contribute to the active site.

It belongs to the 2-oxoacid dehydrogenase family. Forms a 24-polypeptide structural core with octahedral symmetry. Requires (R)-lipoate as cofactor. As to expression, expressed in the non-photosynthetic organs such as siliques, flowers and roots.

It localises to the mitochondrion matrix. It carries out the reaction N(6)-[(R)-dihydrolipoyl]-L-lysyl-[protein] + 2-methylpropanoyl-CoA = N(6)-[(R)-S(8)-2-methylpropanoyldihydrolipoyl]-L-lysyl-[protein] + CoA. Its function is as follows. The branched-chain alpha-keto dehydrogenase complex catalyzes the overall conversion of alpha-keto acids to acyl-CoA and CO(2). It contains multiple copies of three enzymatic components: branched-chain alpha-keto acid decarboxylase (E1), lipoamide acyltransferase (E2) and lipoamide dehydrogenase (E3). Within this complex, the catalytic function of this enzyme is to accept, and to transfer to coenzyme A, acyl groups that are generated by the branched-chain alpha-keto acid decarboxylase component. Required during sugar starvation and acts under the control of a sugar-sensing mechanism involving Ser/Thr kinases and phosphatases. The chain is Lipoamide acyltransferase component of branched-chain alpha-keto acid dehydrogenase complex, mitochondrial (BCE2) from Arabidopsis thaliana (Mouse-ear cress).